The primary structure comprises 630 residues: 1,4-alpha-glucan branching enzyme GlgB (630 aa).

Aspartate 311 functions as the Nucleophile in the catalytic mechanism. The active-site Proton donor is the glutamate 362.

The protein belongs to the glycosyl hydrolase 13 family. GlgB subfamily. Monomer.

It catalyses the reaction Transfers a segment of a (1-&gt;4)-alpha-D-glucan chain to a primary hydroxy group in a similar glucan chain.. Its pathway is glycan biosynthesis; glycogen biosynthesis. Its function is as follows. Catalyzes the formation of the alpha-1,6-glucosidic linkages in glycogen by scission of a 1,4-alpha-linked oligosaccharide from growing alpha-1,4-glucan chains and the subsequent attachment of the oligosaccharide to the alpha-1,6 position. This is 1,4-alpha-glucan branching enzyme GlgB from Aquifex aeolicus (strain VF5).